The sequence spans 178 residues: Acireductone dioxygenase (178 aa).

The tract at residues 1–22 is disordered; that stretch reads MKAYWYDNKPGDQREPHDSGRP. Positions 9-22 are enriched in basic and acidic residues; it reads KPGDQREPHDSGRP. His81, His83, Glu87, and His126 together coordinate Fe(2+). Residues His81, His83, Glu87, and His126 each coordinate Ni(2+).

The protein belongs to the acireductone dioxygenase (ARD) family. Fe(2+) is required as a cofactor. The cofactor is Ni(2+).

The protein resides in the cytoplasm. Its subcellular location is the nucleus. It catalyses the reaction 1,2-dihydroxy-5-(methylsulfanyl)pent-1-en-3-one + O2 = 4-methylsulfanyl-2-oxobutanoate + formate + 2 H(+). The catalysed reaction is 1,2-dihydroxy-5-(methylsulfanyl)pent-1-en-3-one + O2 = 3-(methylsulfanyl)propanoate + CO + formate + 2 H(+). It functions in the pathway amino-acid biosynthesis; L-methionine biosynthesis via salvage pathway; L-methionine from S-methyl-5-thio-alpha-D-ribose 1-phosphate: step 5/6. In terms of biological role, catalyzes 2 different reactions between oxygen and the acireductone 1,2-dihydroxy-3-keto-5-methylthiopentene (DHK-MTPene) depending upon the metal bound in the active site. Fe-containing acireductone dioxygenase (Fe-ARD) produces formate and 2-keto-4-methylthiobutyrate (KMTB), the alpha-ketoacid precursor of methionine in the methionine recycle pathway. Ni-containing acireductone dioxygenase (Ni-ARD) produces methylthiopropionate, carbon monoxide and formate, and does not lie on the methionine recycle pathway. In Emericella nidulans (strain FGSC A4 / ATCC 38163 / CBS 112.46 / NRRL 194 / M139) (Aspergillus nidulans), this protein is Acireductone dioxygenase (adi1).